The primary structure comprises 408 residues: Broad specificity amino-acid racemase (408 aa).

The signal sequence occupies residues 1–21; sequence MHKKTLLATLILGLLAGQAVA. The cysteines at positions 70 and 96 are disulfide-linked. Lys-74 functions as the Proton acceptor in the catalytic mechanism. At Lys-74 the chain carries N6-(pyridoxal phosphate)lysine. Arg-173 is a substrate binding site. Residue Tyr-300 is the Proton acceptor of the active site. Met-348 contributes to the substrate binding site.

This sequence belongs to the alanine racemase family. Bsr subfamily. In terms of assembly, homodimer. Pyridoxal 5'-phosphate is required as a cofactor.

It localises to the periplasm. The catalysed reaction is an L-alpha-amino acid = a D-alpha-amino acid. It carries out the reaction L-lysine = D-lysine. It catalyses the reaction L-arginine = D-arginine. The enzyme catalyses L-alanine = D-alanine. The catalysed reaction is L-serine = D-serine. It carries out the reaction L-methionine = D-methionine. It catalyses the reaction L-leucine = D-leucine. The enzyme catalyses L-cysteine = D-cysteine. The catalysed reaction is L-glutamine = D-glutamine. It carries out the reaction L-asparagine = D-asparagine. It catalyses the reaction L-histidine = D-histidine. In terms of biological role, amino-acid racemase able to utilize a broad range of substrates. Reversibly racemizes ten of the 19 natural chiral amino acids known, including both non-beta-branched aliphatic amino acids (Ala, Leu, Met, Ser, Cys, Gln and Asn) and positively charged amino acids (His, Lys and Arg). Is not active on negatively charged (Glu and Asp) or aromatic (Tyr, Trp and Phe) amino acids and displays minimal activity towards beta-branched aliphatic (Ile, Val and Thr) substrates. Enables bacteria to produce and release extracellular non-canonical D-amino acids (NCDAAs) that regulate diverse cellular processes. This Aeromonas hydrophila subsp. hydrophila (strain ATCC 7966 / DSM 30187 / BCRC 13018 / CCUG 14551 / JCM 1027 / KCTC 2358 / NCIMB 9240 / NCTC 8049) protein is Broad specificity amino-acid racemase.